The primary structure comprises 491 residues: Aspartyl/glutamyl-tRNA(Asn/Gln) amidotransferase subunit B (491 aa).

It belongs to the GatB/GatE family. GatB subfamily. In terms of assembly, heterotrimer of A, B and C subunits.

The catalysed reaction is L-glutamyl-tRNA(Gln) + L-glutamine + ATP + H2O = L-glutaminyl-tRNA(Gln) + L-glutamate + ADP + phosphate + H(+). The enzyme catalyses L-aspartyl-tRNA(Asn) + L-glutamine + ATP + H2O = L-asparaginyl-tRNA(Asn) + L-glutamate + ADP + phosphate + 2 H(+). Functionally, allows the formation of correctly charged Asn-tRNA(Asn) or Gln-tRNA(Gln) through the transamidation of misacylated Asp-tRNA(Asn) or Glu-tRNA(Gln) in organisms which lack either or both of asparaginyl-tRNA or glutaminyl-tRNA synthetases. The reaction takes place in the presence of glutamine and ATP through an activated phospho-Asp-tRNA(Asn) or phospho-Glu-tRNA(Gln). In Burkholderia ambifaria (strain ATCC BAA-244 / DSM 16087 / CCUG 44356 / LMG 19182 / AMMD) (Burkholderia cepacia (strain AMMD)), this protein is Aspartyl/glutamyl-tRNA(Asn/Gln) amidotransferase subunit B.